We begin with the raw amino-acid sequence, 473 residues long: 1-deoxy-D-xylulose 5-phosphate reductoisomerase, chloroplastic (473 aa).

The N-terminal 49 residues, 1–49 (MALKVVSFPGDLAAVSFLDSNRGGAFNQLKVDLPFQTRDRRAVSLRRTC), are a transit peptide targeting the chloroplast. The NADPH site is built by Thr85, Gly86, Ser87, Ile88, Gly111, Asn113, and Asn199. Lys200 contributes to the 1-deoxy-D-xylulose 5-phosphate binding site. Glu201 is an NADPH binding site. Asp225 lines the Mn(2+) pocket. 1-deoxy-D-xylulose 5-phosphate is bound by residues Ser226, Glu227, Ser251, and His274. A Mn(2+)-binding site is contributed by Glu227. An NADPH-binding site is contributed by Gly280. Residues Ser287, Asn292, Lys293, and Glu296 each contribute to the 1-deoxy-D-xylulose 5-phosphate site. Mn(2+) is bound at residue Glu296.

Belongs to the DXR family. Requires Mn(2+) as cofactor. The cofactor is Mg(2+).

The protein resides in the plastid. It is found in the chloroplast stroma. It catalyses the reaction 2-C-methyl-D-erythritol 4-phosphate + NADP(+) = 1-deoxy-D-xylulose 5-phosphate + NADPH + H(+). It participates in isoprenoid biosynthesis; isopentenyl diphosphate biosynthesis via DXP pathway; isopentenyl diphosphate from 1-deoxy-D-xylulose 5-phosphate: step 1/6. Its function is as follows. Enzyme of the plastid non-mevalonate pathway for isoprenoid biosynthesis that catalyzes the NADPH-dependent rearrangement and reduction of 1-deoxy-D-xylulose-5-phosphate (DXP) to 2-C-methyl-D-erythritol 4-phosphate (MEP). Required for chloroplast development. This chain is 1-deoxy-D-xylulose 5-phosphate reductoisomerase, chloroplastic (DXR), found in Oryza sativa subsp. japonica (Rice).